The sequence spans 1072 residues: Error-prone DNA polymerase (1072 aa).

This sequence belongs to the DNA polymerase type-C family. DnaE2 subfamily.

The protein resides in the cytoplasm. The catalysed reaction is DNA(n) + a 2'-deoxyribonucleoside 5'-triphosphate = DNA(n+1) + diphosphate. Its function is as follows. DNA polymerase involved in damage-induced mutagenesis and translesion synthesis (TLS). It is not the major replicative DNA polymerase. This Burkholderia pseudomallei (strain K96243) protein is Error-prone DNA polymerase.